We begin with the raw amino-acid sequence, 463 residues long: GTPase Der (463 aa).

2 consecutive EngA-type G domains span residues 2–164 and 198–369; these read KKII…PKSK and IKIG…KNYT. GTP contacts are provided by residues 8–15, 55–59, 116–119, 204–211, 251–255, and 315–318; these read GRPNVGKS, DSGGL, NKVD, GRVNVGKS, DTAGI, and NKWD. Residues 370–454 enclose the KH-like domain; that stretch reads QKMKTSRLNE…PVILIPKNRS (85 aa).

It belongs to the TRAFAC class TrmE-Era-EngA-EngB-Septin-like GTPase superfamily. EngA (Der) GTPase family. As to quaternary structure, associates with the 50S ribosomal subunit.

Its function is as follows. GTPase that plays an essential role in the late steps of ribosome biogenesis. The polypeptide is GTPase Der (Campylobacter fetus subsp. fetus (strain 82-40)).